The primary structure comprises 141 residues: Large ribosomal subunit protein uL11 (141 aa).

This sequence belongs to the universal ribosomal protein uL11 family. Part of the ribosomal stalk of the 50S ribosomal subunit. Interacts with L10 and the large rRNA to form the base of the stalk. L10 forms an elongated spine to which L12 dimers bind in a sequential fashion forming a multimeric L10(L12)X complex. Post-translationally, one or more lysine residues are methylated.

Forms part of the ribosomal stalk which helps the ribosome interact with GTP-bound translation factors. The sequence is that of Large ribosomal subunit protein uL11 from Helicobacter pylori (strain P12).